The following is a 207-amino-acid chain: Peptidyl-tRNA hydrolase (207 aa).

A tRNA-binding site is contributed by tyrosine 14. Residue histidine 19 is the Proton acceptor of the active site. TRNA-binding residues include tyrosine 64, asparagine 66, and asparagine 112.

The protein belongs to the PTH family. In terms of assembly, monomer.

The protein resides in the cytoplasm. The catalysed reaction is an N-acyl-L-alpha-aminoacyl-tRNA + H2O = an N-acyl-L-amino acid + a tRNA + H(+). Functionally, hydrolyzes ribosome-free peptidyl-tRNAs (with 1 or more amino acids incorporated), which drop off the ribosome during protein synthesis, or as a result of ribosome stalling. In terms of biological role, catalyzes the release of premature peptidyl moieties from peptidyl-tRNA molecules trapped in stalled 50S ribosomal subunits, and thus maintains levels of free tRNAs and 50S ribosomes. The polypeptide is Peptidyl-tRNA hydrolase (Rhodopseudomonas palustris (strain BisB5)).